Here is a 189-residue protein sequence, read N- to C-terminus: dTTP/UTP pyrophosphatase (189 aa).

Residue aspartate 70 is the Proton acceptor of the active site.

It belongs to the Maf family. YhdE subfamily. It depends on a divalent metal cation as a cofactor.

The protein resides in the cytoplasm. The enzyme catalyses dTTP + H2O = dTMP + diphosphate + H(+). It carries out the reaction UTP + H2O = UMP + diphosphate + H(+). Its function is as follows. Nucleoside triphosphate pyrophosphatase that hydrolyzes dTTP and UTP. May have a dual role in cell division arrest and in preventing the incorporation of modified nucleotides into cellular nucleic acids. The polypeptide is dTTP/UTP pyrophosphatase (Akkermansia muciniphila (strain ATCC BAA-835 / DSM 22959 / JCM 33894 / BCRC 81048 / CCUG 64013 / CIP 107961 / Muc)).